The following is a 42-amino-acid chain: MRARLCQESALDSFLSMRLDGGGHWGRCRRAPDPLWEEQDIA.

This is an uncharacterized protein from Treponema pallidum (strain Nichols).